The following is a 464-amino-acid chain: 3-isopropylmalate dehydratase large subunit (464 aa).

[4Fe-4S] cluster-binding residues include Cys337, Cys397, and Cys400.

Belongs to the aconitase/IPM isomerase family. LeuC type 1 subfamily. In terms of assembly, heterodimer of LeuC and LeuD. The cofactor is [4Fe-4S] cluster.

The catalysed reaction is (2R,3S)-3-isopropylmalate = (2S)-2-isopropylmalate. It functions in the pathway amino-acid biosynthesis; L-leucine biosynthesis; L-leucine from 3-methyl-2-oxobutanoate: step 2/4. Functionally, catalyzes the isomerization between 2-isopropylmalate and 3-isopropylmalate, via the formation of 2-isopropylmaleate. This chain is 3-isopropylmalate dehydratase large subunit, found in Bacillus mycoides (strain KBAB4) (Bacillus weihenstephanensis).